We begin with the raw amino-acid sequence, 199 residues long: Chaperone protein TorD (199 aa).

It belongs to the TorD/DmsD family. TorD subfamily.

The protein localises to the cytoplasm. In terms of biological role, involved in the biogenesis of TorA. Acts on TorA before the insertion of the molybdenum cofactor and, as a result, probably favors a conformation of the apoenzyme that is competent for acquiring the cofactor. This chain is Chaperone protein TorD, found in Escherichia coli O45:K1 (strain S88 / ExPEC).